Consider the following 88-residue polypeptide: MSYQYPMDETWSTEEIIDVVNFFSLIEKAYEKQVDREEILALYRRFKQIVPSKSEEKKLFTQFQEASGYSSYHVVKKARETNESNIRM.

It belongs to the UPF0223 family.

The protein is UPF0223 protein OB1419 of Oceanobacillus iheyensis (strain DSM 14371 / CIP 107618 / JCM 11309 / KCTC 3954 / HTE831).